The chain runs to 462 residues: Zinc transporter 6-B (462 aa).

Over 1–33 (MGTIYLFRKTQRSLLGKLTQEFRLVTADRRSWK) the chain is Cytoplasmic. A helical membrane pass occupies residues 34 to 54 (ILLFGAINVVCTGFLLTWCSS). Residues 55–64 (TNSMALTAYT) lie on the Extracellular side of the membrane. A helical transmembrane segment spans residues 65–85 (YLTIFDLFSLITSLISYWVMM). Residues 86-98 (KKPSPTYSFGFER) lie on the Cytoplasmic side of the membrane. A helical membrane pass occupies residues 99-119 (LEVLAVFASTVLAQLGALFIL). The Extracellular segment spans residues 120–134 (KESAERFLEQPEIHT). Residues 135-155 (GRLLVGTFVALFFNLFTMLSI) traverse the membrane as a helical segment. Residues 156 to 200 (RNKPFAYVSEAASTSWLQEHVADLSRSLCGVIPGLSSIFLPRMNP) lie on the Cytoplasmic side of the membrane. A helical membrane pass occupies residues 201–221 (FVLIDIAGALALCITYMLIEI). Residues 222–223 (NN) lie on the Extracellular side of the membrane. A helical membrane pass occupies residues 224-244 (YFAVDTASAIAIAVMTFGTMY). Residues 245–462 (PMSVYSGKVL…TPGQFTQFRQ (218 aa)) lie on the Cytoplasmic side of the membrane.

The protein belongs to the cation diffusion facilitator (CDF) transporter (TC 2.A.4) family. SLC30A subfamily. As to quaternary structure, heterodimer with SLC30A5; form a functional zinc ion transmembrane transporter.

It localises to the golgi apparatus. It is found in the trans-Golgi network membrane. In terms of biological role, has probably no intrinsic transporter activity but together with SLC30A5 forms a functional zinc ion:proton antiporter heterodimer, mediating zinc entry into the lumen of organelles along the secretory pathway. As part of that zinc ion:proton antiporter, contributes to zinc ion homeostasis within the early secretory pathway and regulates the activation and folding of enzymes like alkaline phosphatases and enzymes involved in phosphatidylinositol glycan anchor biosynthesis. The chain is Zinc transporter 6-B (slc30a6-b) from Xenopus laevis (African clawed frog).